Here is a 60-residue protein sequence, read N- to C-terminus: Andropin (60 aa).

The signal sequence occupies residues 1 to 23 (MKYFVVLVVLALILAIAVGPSDA).

It belongs to the andropin family. In terms of tissue distribution, ejaculatory duct of adult males.

It is found in the secreted. Its function is as follows. Male-specific peptide with moderate activity against Gram-positive bacteria. The protein is Andropin (Anp) of Drosophila simulans (Fruit fly).